We begin with the raw amino-acid sequence, 276 residues long: MGIKNLNSVTASLRGTVLLDKSMLWKGKPEKSLVSYKISRGGRNSRGVITVRHRGRGHKRLYRVVDFKRNKVGVSATVERLEYDPNRTAFIALLSYDDGEKSYIIAPNGLKKGDVVISGDGADILPGNCLLLKSIPVGTFVHNVELRPGNGGVIARSAGTYAQLMSKDGMYVLLRLSSGEIRKVLSDCRATIGIVSNLDNQNVKLGKAGRSRWLGIRPTVRGVAMNPIDHPHGGGEGKTSGGRNPVTPWGVPTKGKKTRKRNKSSNKYIKRVSDKG.

The tract at residues 224–276 (AMNPIDHPHGGGEGKTSGGRNPVTPWGVPTKGKKTRKRNKSSNKYIKRVSDKG) is disordered. Residues 254 to 270 (KGKKTRKRNKSSNKYIK) show a composition bias toward basic residues.

This sequence belongs to the universal ribosomal protein uL2 family. As to quaternary structure, part of the 50S ribosomal subunit. Forms a bridge to the 30S subunit in the 70S ribosome.

Functionally, one of the primary rRNA binding proteins. Required for association of the 30S and 50S subunits to form the 70S ribosome, for tRNA binding and peptide bond formation. It has been suggested to have peptidyltransferase activity; this is somewhat controversial. Makes several contacts with the 16S rRNA in the 70S ribosome. The protein is Large ribosomal subunit protein uL2 of Ehrlichia chaffeensis (strain ATCC CRL-10679 / Arkansas).